Consider the following 214-residue polypeptide: Protein-L-isoaspartate O-methyltransferase (214 aa).

Ser-63 is a catalytic residue.

The protein belongs to the methyltransferase superfamily. L-isoaspartyl/D-aspartyl protein methyltransferase family.

It localises to the cytoplasm. The enzyme catalyses [protein]-L-isoaspartate + S-adenosyl-L-methionine = [protein]-L-isoaspartate alpha-methyl ester + S-adenosyl-L-homocysteine. Its function is as follows. Catalyzes the methyl esterification of L-isoaspartyl residues in peptides and proteins that result from spontaneous decomposition of normal L-aspartyl and L-asparaginyl residues. It plays a role in the repair and/or degradation of damaged proteins. In Desulfotalea psychrophila (strain LSv54 / DSM 12343), this protein is Protein-L-isoaspartate O-methyltransferase.